The chain runs to 187 residues: F-box protein At5g41720 (187 aa).

The F-box domain occupies 2-49 (MMNSPLDYDVLLEIMSYCPATEMAKFRLLSKECNKRSYEMSFINRHLH).

In Arabidopsis thaliana (Mouse-ear cress), this protein is F-box protein At5g41720.